The primary structure comprises 371 residues: F-box protein At2g41170 (371 aa).

An F-box domain is found at 56 to 102 (KMSLLDLPDLTLDCILEKLSPSELCAMTSVCSELRDKCVSDHLWEKH).

In Arabidopsis thaliana (Mouse-ear cress), this protein is F-box protein At2g41170.